Reading from the N-terminus, the 606-residue chain is Putative auxin response factor 21 (606 aa).

A DNA-binding region (TF-B3) is located at residues 126–228 (FTKVLTASDT…ELRVGIRRAR (103 aa)). In terms of domain architecture, PB1 spans 511 to 592 (RTCTKVQMQG…MVKKILIYSK (82 aa)).

This sequence belongs to the ARF family. In terms of assembly, homodimers and heterodimers.

Its subcellular location is the nucleus. In terms of biological role, auxin response factors (ARFs) are transcriptional factors that bind specifically to the DNA sequence 5'-TGTCTC-3' found in the auxin-responsive promoter elements (AuxREs). Could act as transcriptional activator or repressor. Formation of heterodimers with Aux/IAA proteins may alter their ability to modulate early auxin response genes expression. This chain is Putative auxin response factor 21 (ARF21), found in Arabidopsis thaliana (Mouse-ear cress).